The following is a 136-amino-acid chain: D-ribose pyranase (136 aa).

Catalysis depends on His-20, which acts as the Proton donor. Residues Asp-28, His-98, and 120–122 (YAN) each bind substrate.

This sequence belongs to the RbsD / FucU family. RbsD subfamily. In terms of assembly, homodecamer.

The protein resides in the cytoplasm. It catalyses the reaction beta-D-ribopyranose = beta-D-ribofuranose. It functions in the pathway carbohydrate metabolism; D-ribose degradation; D-ribose 5-phosphate from beta-D-ribopyranose: step 1/2. Its function is as follows. Catalyzes the interconversion of beta-pyran and beta-furan forms of D-ribose. In Geobacillus kaustophilus (strain HTA426), this protein is D-ribose pyranase.